The following is a 75-amino-acid chain: ATP synthase subunit 9, mitochondrial (75 aa).

2 consecutive transmembrane segments (helical) span residues 10–30 and 55–75; these read LVLG…GILF and FALV…VYFI.

The protein belongs to the ATPase C chain family. In terms of assembly, F-type ATPases have 2 components, CF(1) - the catalytic core - and CF(0) - the membrane proton channel. CF(1) has five subunits: alpha(3), beta(3), gamma(1), delta(1), epsilon(1). CF(0) has three main subunits: a, b and c.

Its subcellular location is the mitochondrion membrane. Mitochondrial membrane ATP synthase (F(1)F(0) ATP synthase or Complex V) produces ATP from ADP in the presence of a proton gradient across the membrane which is generated by electron transport complexes of the respiratory chain. F-type ATPases consist of two structural domains, F(1) - containing the extramembraneous catalytic core and F(0) - containing the membrane proton channel, linked together by a central stalk and a peripheral stalk. During catalysis, ATP synthesis in the catalytic domain of F(1) is coupled via a rotary mechanism of the central stalk subunits to proton translocation. Part of the complex F(0) domain. A homomeric c-ring of probably 10 subunits is part of the complex rotary element. The polypeptide is ATP synthase subunit 9, mitochondrial (ATP9) (Paramecium tetraurelia).